The following is a 389-amino-acid chain: Ribonucleoside-diphosphate reductase subunit M2 (389 aa).

At Ser20 the chain carries Phosphoserine. Thr33 carries the phosphothreonine modification. A Cy motif is present at residues 49 to 51 (RRI). Residues Asp138, Glu169, and His172 each coordinate Fe cation. Residue Tyr176 is part of the active site. 3 residues coordinate Fe cation: Glu232, Glu266, and His269.

Belongs to the ribonucleoside diphosphate reductase small chain family. As to quaternary structure, heterodimer of a large and a small subunit. Interacts (via Cy motif and when phosphorylated at Thr-33) with CCNF; the interaction occurs exclusively in G2 and early M. The cofactor is Fe cation. In terms of processing, phosphorylation on Ser-20 relieves the inhibitory effect on Wnt signaling. Phosphorylated on Thr-33 by CDK1 and CDK2; predominantly in G2 and M phase. Post-translationally, ubiquitinated by the SCF(CCNF) E3 ubiquitin-protein ligase complex; leading to its degradation by the proteasome.

It is found in the cytoplasm. Its subcellular location is the nucleus. The catalysed reaction is a 2'-deoxyribonucleoside 5'-diphosphate + [thioredoxin]-disulfide + H2O = a ribonucleoside 5'-diphosphate + [thioredoxin]-dithiol. In terms of biological role, provides the precursors necessary for DNA synthesis. Catalyzes the biosynthesis of deoxyribonucleotides from the corresponding ribonucleotides. Inhibits Wnt signaling. This is Ribonucleoside-diphosphate reductase subunit M2 (RRM2) from Macaca fascicularis (Crab-eating macaque).